The primary structure comprises 391 residues: Na(+)/H(+) antiporter NhaA (391 aa).

Helical transmembrane passes span Ala-14–Leu-34, Leu-59–Val-79, Ser-95–Phe-115, Val-124–Leu-144, Val-154–Phe-174, Thr-177–Leu-197, Leu-213–Ile-233, Phe-261–Leu-281, Ile-292–Val-312, Val-331–Val-351, and Leu-363–Val-383.

The protein belongs to the NhaA Na(+)/H(+) (TC 2.A.33) antiporter family.

It localises to the cell inner membrane. It carries out the reaction Na(+)(in) + 2 H(+)(out) = Na(+)(out) + 2 H(+)(in). Na(+)/H(+) antiporter that extrudes sodium in exchange for external protons. The polypeptide is Na(+)/H(+) antiporter NhaA (Shewanella pealeana (strain ATCC 700345 / ANG-SQ1)).